Reading from the N-terminus, the 328-residue chain is L-lactate dehydrogenase (328 aa).

NAD(+) is bound by residues Val18, Glu39, Lys46, Tyr71, and 85-86 (GA). 2 residues coordinate substrate: Gln88 and Arg94. Residues Ser107, 124–126 (AAN), and Ser149 each bind NAD(+). 126 to 129 (NPVD) is a substrate binding site. 154–157 (DTAR) contacts substrate. 2 residues coordinate beta-D-fructose 1,6-bisphosphate: Arg159 and His174. His181 functions as the Proton acceptor in the catalytic mechanism. Position 226 is a phosphotyrosine (Tyr226). Thr235 contributes to the substrate binding site.

This sequence belongs to the LDH/MDH superfamily. LDH family. As to quaternary structure, homotetramer.

It localises to the cytoplasm. The catalysed reaction is (S)-lactate + NAD(+) = pyruvate + NADH + H(+). Its pathway is fermentation; pyruvate fermentation to lactate; (S)-lactate from pyruvate: step 1/1. With respect to regulation, allosterically activated by fructose 1,6-bisphosphate (FBP). Functionally, catalyzes the conversion of lactate to pyruvate. This Streptococcus mutans serotype c (strain ATCC 700610 / UA159) protein is L-lactate dehydrogenase.